A 200-amino-acid chain; its full sequence is Recombination protein RecR (200 aa).

The C4-type zinc-finger motif lies at 58-75 (CPDCFCLKTSKTSSCDFC). The 96-residue stretch at 82-177 (SFLCIVATPK…KISRLALGMP (96 aa)) folds into the Toprim domain.

Belongs to the RecR family.

In terms of biological role, may play a role in DNA repair. It seems to be involved in an RecBC-independent recombinational process of DNA repair. It may act with RecF and RecO. In Chlamydia muridarum (strain MoPn / Nigg), this protein is Recombination protein RecR.